Reading from the N-terminus, the 146-residue chain is Hemoglobin subunit beta (146 aa).

V1 carries the post-translational modification N-acetylvaline. The 145-residue stretch at 2–146 (HLTGEEKSLV…VANALAHKYH (145 aa)) folds into the Globin domain. A Phosphothreonine modification is found at T12. Residue S44 is modified to Phosphoserine. N6-acetyllysine is present on K59. Heme b is bound at residue H63. An N6-acetyllysine modification is found at K82. H92 serves as a coordination point for heme b. C93 bears the S-nitrosocysteine mark. An N6-acetyllysine modification is found at K144.

Belongs to the globin family. As to quaternary structure, heterotetramer of two alpha chains and two beta chains. As to expression, red blood cells.

Functionally, involved in oxygen transport from the lung to the various peripheral tissues. This is Hemoglobin subunit beta (HBB) from Ursus maritimus (Polar bear).